The primary structure comprises 205 residues: MAFRLVLASQSPRRRELLDQLGVAHEVRPANTDESVHPGEPARAYVLRVAREKARAVEGELVLAADTAVVLRGEVLGKPRDAEDARRMLAALSGTAHEVLTGVCVRRRPGRGSAVELDAVVSTAVRFAPLGPAEISWYVATGEPLDKAGAYAIQGVGGAFVLGVEGSVSNVVGLPLAETAELLRRAGHPLPWDAPGGPAQGGGAP.

Catalysis depends on Asp66, which acts as the Proton acceptor.

Belongs to the Maf family. YhdE subfamily. It depends on a divalent metal cation as a cofactor.

It localises to the cytoplasm. It carries out the reaction dTTP + H2O = dTMP + diphosphate + H(+). It catalyses the reaction UTP + H2O = UMP + diphosphate + H(+). Its function is as follows. Nucleoside triphosphate pyrophosphatase that hydrolyzes dTTP and UTP. May have a dual role in cell division arrest and in preventing the incorporation of modified nucleotides into cellular nucleic acids. This chain is dTTP/UTP pyrophosphatase, found in Anaeromyxobacter sp. (strain Fw109-5).